A 1108-amino-acid polypeptide reads, in one-letter code: DNA-directed RNA polymerase subunit beta (1108 aa).

A disordered region spans residues 1081-1108 (SPRRTPARPTIDYSALDDTDDKEGATTF).

It belongs to the RNA polymerase beta chain family. In terms of assembly, in cyanobacteria the RNAP catalytic core is composed of 2 alpha, 1 beta, 1 beta', 1 gamma and 1 omega subunit. When a sigma factor is associated with the core the holoenzyme is formed, which can initiate transcription.

The catalysed reaction is RNA(n) + a ribonucleoside 5'-triphosphate = RNA(n+1) + diphosphate. Functionally, DNA-dependent RNA polymerase catalyzes the transcription of DNA into RNA using the four ribonucleoside triphosphates as substrates. The polypeptide is DNA-directed RNA polymerase subunit beta (Thermosynechococcus vestitus (strain NIES-2133 / IAM M-273 / BP-1)).